The chain runs to 346 residues: Melanoma-associated antigen B4 (346 aa).

The segment covering M1 to T18 has biased composition (basic residues). The segment at M1–D107 is disordered. Residues V45–L54 show a composition bias toward polar residues. Residues A92–T101 show a composition bias toward low complexity. Residues L109 to A307 form the MAGE domain. The segment at E311 to M346 is disordered. Low complexity predominate over residues R318–M346.

As to expression, expressed in testis.

It is found in the cytoplasm. In Homo sapiens (Human), this protein is Melanoma-associated antigen B4 (MAGEB4).